Reading from the N-terminus, the 75-residue chain is DNA-directed RNA polymerase subunit omega (75 aa).

This sequence belongs to the RNA polymerase subunit omega family. As to quaternary structure, in cyanobacteria the RNAP catalytic core is composed of 2 alpha, 1 beta, 1 beta', 1 gamma and 1 omega subunit. When a sigma factor is associated with the core the holoenzyme is formed, which can initiate transcription.

The catalysed reaction is RNA(n) + a ribonucleoside 5'-triphosphate = RNA(n+1) + diphosphate. Its function is as follows. Promotes RNA polymerase assembly. Latches the N- and C-terminal regions of the beta' subunit thereby facilitating its interaction with the beta and alpha subunits. The protein is DNA-directed RNA polymerase subunit omega of Cyanothece sp. (strain PCC 7425 / ATCC 29141).